A 156-amino-acid chain; its full sequence is Cellulose synthase operon protein D (156 aa).

The protein operates within glycan metabolism; bacterial cellulose biosynthesis. Its function is as follows. May have a major role in the perfection of crystallization, involved either in the pore structure itself or in the organization of the pores within the linear array of terminal synthesizing complexes (TCs). The sequence is that of Cellulose synthase operon protein D (bcsDI) from Komagataeibacter xylinus (Gluconacetobacter xylinus).